The following is a 508-amino-acid chain: Photosystem II CP47 reaction center protein (508 aa).

Helical transmembrane passes span 21-36 (AVHL…WAGS), 101-115 (IVLS…IWHW), 140-156 (GIHL…FGAF), 203-218 (IAAG…FHLS), 237-252 (VLSS…AFVV), and 457-472 (TFAL…HGAR).

This sequence belongs to the PsbB/PsbC family. PsbB subfamily. PSII is composed of 1 copy each of membrane proteins PsbA, PsbB, PsbC, PsbD, PsbE, PsbF, PsbH, PsbI, PsbJ, PsbK, PsbL, PsbM, PsbT, PsbX, PsbY, PsbZ, Psb30/Ycf12, at least 3 peripheral proteins of the oxygen-evolving complex and a large number of cofactors. It forms dimeric complexes. Binds multiple chlorophylls. PSII binds additional chlorophylls, carotenoids and specific lipids. is required as a cofactor.

It localises to the plastid. The protein localises to the chloroplast thylakoid membrane. One of the components of the core complex of photosystem II (PSII). It binds chlorophyll and helps catalyze the primary light-induced photochemical processes of PSII. PSII is a light-driven water:plastoquinone oxidoreductase, using light energy to abstract electrons from H(2)O, generating O(2) and a proton gradient subsequently used for ATP formation. The chain is Photosystem II CP47 reaction center protein from Anthoceros angustus (Hornwort).